The primary structure comprises 238 residues: MRPSGRSAQQVRPVTLTRHYTKHAEGSVLVEFGDTKVLCTATIEEGVPRFLKGKGQGWVTAEYGMLPRATHSRNAREAAKGKQGGRTLEIQRLIARSLRAAIDLKVLGEFTITLDCDVLQADGGTRTASITGACVALADALNHLVSTGKLKANPMKGMVAAISVGIVNGEALCDLEYVEDAAAETDMNVVMTEDGRMIEVQGTAEGEPFSHEELLKLLELARGGIDTLVAAQKAALTD.

Phosphate is bound by residues R86 and 124–126 (GTR).

The protein belongs to the RNase PH family. In terms of assembly, homohexameric ring arranged as a trimer of dimers.

It catalyses the reaction tRNA(n+1) + phosphate = tRNA(n) + a ribonucleoside 5'-diphosphate. Its function is as follows. Phosphorolytic 3'-5' exoribonuclease that plays an important role in tRNA 3'-end maturation. Removes nucleotide residues following the 3'-CCA terminus of tRNAs; can also add nucleotides to the ends of RNA molecules by using nucleoside diphosphates as substrates, but this may not be physiologically important. Probably plays a role in initiation of 16S rRNA degradation (leading to ribosome degradation) during starvation. The chain is Ribonuclease PH from Erwinia tasmaniensis (strain DSM 17950 / CFBP 7177 / CIP 109463 / NCPPB 4357 / Et1/99).